The chain runs to 159 residues: Probable inactive acireductone dioxygenase 2 (159 aa).

Belongs to the acireductone dioxygenase (ARD) family.

Its subcellular location is the cytoplasm. The protein resides in the nucleus. Probable inactive acireductone dioxygenase. The sequence is that of Probable inactive acireductone dioxygenase 2 from Caenorhabditis briggsae.